Reading from the N-terminus, the 252-residue chain is Aquaporin TIP4-4 (252 aa).

2 helical membrane passes run 20–40 (AVLAELILTFLFVFAGVGSAM) and 53–73 (VVGLTAVALAHTLVVAVMVSA). The NPA 1 motif lies at 83–85 (NPA). The next 3 helical transmembrane spans lie at 105–125 (VAAQLLGSTLACLLLAFLAVA), 143–163 (GVLMEAVLTFSLLFAVYATVV), and 168–188 (AVGGMGPLLVGLVVGANVLAG). The NPA 2 motif lies at 197–199 (NPA). A helical transmembrane segment spans residues 216-236 (VYWVGPLIGGPLAGLVYDGLF).

The protein belongs to the MIP/aquaporin (TC 1.A.8) family. TIP (TC 1.A.8.10) subfamily.

Its subcellular location is the vacuole membrane. Functionally, aquaporins facilitate the transport of water and small neutral solutes across cell membranes. In Zea mays (Maize), this protein is Aquaporin TIP4-4 (TIP4-4).